The following is a 353-amino-acid chain: Nicotinate-nucleotide--dimethylbenzimidazole phosphoribosyltransferase (353 aa).

The active-site Proton acceptor is E320.

Belongs to the CobT family.

It catalyses the reaction 5,6-dimethylbenzimidazole + nicotinate beta-D-ribonucleotide = alpha-ribazole 5'-phosphate + nicotinate + H(+). The protein operates within nucleoside biosynthesis; alpha-ribazole biosynthesis; alpha-ribazole from 5,6-dimethylbenzimidazole: step 1/2. Catalyzes the synthesis of alpha-ribazole-5'-phosphate from nicotinate mononucleotide (NAMN) and 5,6-dimethylbenzimidazole (DMB). This Pseudoalteromonas translucida (strain TAC 125) protein is Nicotinate-nucleotide--dimethylbenzimidazole phosphoribosyltransferase.